Reading from the N-terminus, the 140-residue chain is FAD synthase (140 aa).

Residues 9-10 (TF), 14-17 (HPGH), Asn92, and Tyr119 each bind ATP.

The protein belongs to the archaeal FAD synthase family. In terms of assembly, homodimer. It depends on a divalent metal cation as a cofactor.

The enzyme catalyses FMN + ATP + H(+) = FAD + diphosphate. Its pathway is cofactor biosynthesis; FAD biosynthesis; FAD from FMN: step 1/1. Its function is as follows. Catalyzes the transfer of the AMP portion of ATP to flavin mononucleotide (FMN) to produce flavin adenine dinucleotide (FAD) coenzyme. This chain is FAD synthase, found in Methanocorpusculum labreanum (strain ATCC 43576 / DSM 4855 / Z).